Here is a 1275-residue protein sequence, read N- to C-terminus: Serine/threonine-protein kinase ULK4 (1275 aa).

The region spanning 4–280 (FILYEEIGRG…WTRLLQHSFW (277 aa)) is the Protein kinase domain. The Proton acceptor role is filled by Asp121. Disordered regions lie at residues 299–346 (SRNT…EFRP) and 359–393 (FLLSSRPTPRTSTAVEVSPGEDRTHCSPQKTSPLT). Basic and acidic residues predominate over residues 336–346 (FRLENPTEFRP). Composition is skewed to polar residues over residues 363–373 (SRPTPRTSTAV) and 384–393 (CSPQKTSPLT). HEAT repeat units lie at residues 727 to 765 (LIQEKDFVSTIIRLLESPSTYIRAKAFLVLLYILIYNRE), 842 to 880 (LKMCLPLMPIVLHLVTSQVFRPQVVTEEFLFSYGTILSH), 926 to 964 (STVVDYILPPLVSLVQSQNVEWRLFSLRLLSETTSLLVN), 1025 to 1063 (LVEESKLIPLIFEVTLEHQESILGNTMQSVIALLNNLVA), 1151 to 1189 (NRPLTDLISLLIPLLPNEDPEIFDVSSKCLSILVQLYGG), and 1213 to 1253 (PKEQ…LAPG).

Belongs to the protein kinase superfamily. Ser/Thr protein kinase family. APG1/unc-51/ULK1 subfamily.

It catalyses the reaction L-seryl-[protein] + ATP = O-phospho-L-seryl-[protein] + ADP + H(+). The catalysed reaction is L-threonyl-[protein] + ATP = O-phospho-L-threonyl-[protein] + ADP + H(+). Its function is as follows. May be involved in the remodeling of cytoskeletal components, such as alpha-tubulin, and in this way regulates neurite branching and elongation, as well as cell motility. This chain is Serine/threonine-protein kinase ULK4 (ULK4), found in Pongo abelii (Sumatran orangutan).